We begin with the raw amino-acid sequence, 322 residues long: tRNA N6-adenosine threonylcarbamoyltransferase (322 aa).

Fe cation-binding residues include histidine 109 and histidine 113. Substrate-binding positions include 131-135 (LISGG), aspartate 164, glycine 177, aspartate 181, and asparagine 277. Aspartate 303 contributes to the Fe cation binding site.

This sequence belongs to the KAE1 / TsaD family. Fe(2+) is required as a cofactor.

It localises to the cytoplasm. It catalyses the reaction L-threonylcarbamoyladenylate + adenosine(37) in tRNA = N(6)-L-threonylcarbamoyladenosine(37) in tRNA + AMP + H(+). Required for the formation of a threonylcarbamoyl group on adenosine at position 37 (t(6)A37) in tRNAs that read codons beginning with adenine. Is involved in the transfer of the threonylcarbamoyl moiety of threonylcarbamoyl-AMP (TC-AMP) to the N6 group of A37, together with TsaE and TsaB. TsaD likely plays a direct catalytic role in this reaction. In Mesomycoplasma hyopneumoniae (strain 232) (Mycoplasma hyopneumoniae), this protein is tRNA N6-adenosine threonylcarbamoyltransferase.